A 239-amino-acid polypeptide reads, in one-letter code: Aspartate/glutamate leucyltransferase (239 aa).

The protein belongs to the R-transferase family. Bpt subfamily.

The protein resides in the cytoplasm. The enzyme catalyses N-terminal L-glutamyl-[protein] + L-leucyl-tRNA(Leu) = N-terminal L-leucyl-L-glutamyl-[protein] + tRNA(Leu) + H(+). It catalyses the reaction N-terminal L-aspartyl-[protein] + L-leucyl-tRNA(Leu) = N-terminal L-leucyl-L-aspartyl-[protein] + tRNA(Leu) + H(+). In terms of biological role, functions in the N-end rule pathway of protein degradation where it conjugates Leu from its aminoacyl-tRNA to the N-termini of proteins containing an N-terminal aspartate or glutamate. The polypeptide is Aspartate/glutamate leucyltransferase (Campylobacter jejuni subsp. jejuni serotype O:23/36 (strain 81-176)).